The following is a 193-amino-acid chain: Ion-translocating oxidoreductase complex subunit A (193 aa).

The next 6 membrane-spanning stretches (helical) occupy residues L5 to L25, F47 to L67, L72 to V92, L102 to L122, A134 to I154, and A171 to V191.

Belongs to the NqrDE/RnfAE family. The complex is composed of six subunits: RsxA, RsxB, RsxC, RsxD, RsxE and RsxG.

It is found in the cell inner membrane. In terms of biological role, part of a membrane-bound complex that couples electron transfer with translocation of ions across the membrane. Required to maintain the reduced state of SoxR. In Salmonella arizonae (strain ATCC BAA-731 / CDC346-86 / RSK2980), this protein is Ion-translocating oxidoreductase complex subunit A.